The primary structure comprises 443 residues: COP9 signalosome complex subunit 2 (443 aa).

A PCI domain is found at 254–416; that stretch reads AHTDFFEAFK…QLLELDHQKR (163 aa).

Belongs to the CSN2 family. Component of the CSN complex, probably composed of cops1, cops2, cops3, cops4, cops5, cops6, cops7, cops8 and cops9.

Its subcellular location is the cytoplasm. The protein localises to the nucleus. Its function is as follows. Essential component of the COP9 signalosome complex (CSN), a complex involved in various cellular and developmental processes. The CSN complex is an essential regulator of the ubiquitin (Ubl) conjugation pathway by mediating the deneddylation of the cullin subunits of E3 ligase complexes, leading to modify the Ubl ligase activity. This is COP9 signalosome complex subunit 2 (cops2) from Danio rerio (Zebrafish).